A 362-amino-acid chain; its full sequence is tRNA 2-selenouridine synthase (362 aa).

The Rhodanese domain maps to 14-137 (LANETPIIDV…LRQATIEMTN (124 aa)). Cysteine 97 (S-selanylcysteine intermediate) is an active-site residue.

Belongs to the SelU family. As to quaternary structure, monomer.

It carries out the reaction 5-methylaminomethyl-2-thiouridine(34) in tRNA + selenophosphate + (2E)-geranyl diphosphate + H2O + H(+) = 5-methylaminomethyl-2-selenouridine(34) in tRNA + (2E)-thiogeraniol + phosphate + diphosphate. It catalyses the reaction 5-methylaminomethyl-2-thiouridine(34) in tRNA + (2E)-geranyl diphosphate = 5-methylaminomethyl-S-(2E)-geranyl-thiouridine(34) in tRNA + diphosphate. The enzyme catalyses 5-methylaminomethyl-S-(2E)-geranyl-thiouridine(34) in tRNA + selenophosphate + H(+) = 5-methylaminomethyl-2-(Se-phospho)selenouridine(34) in tRNA + (2E)-thiogeraniol. The catalysed reaction is 5-methylaminomethyl-2-(Se-phospho)selenouridine(34) in tRNA + H2O = 5-methylaminomethyl-2-selenouridine(34) in tRNA + phosphate. In terms of biological role, involved in the post-transcriptional modification of the uridine at the wobble position (U34) of tRNA(Lys), tRNA(Glu) and tRNA(Gln). Catalyzes the conversion of 2-thiouridine (S2U-RNA) to 2-selenouridine (Se2U-RNA). Acts in a two-step process involving geranylation of 2-thiouridine (S2U) to S-geranyl-2-thiouridine (geS2U) and subsequent selenation of the latter derivative to 2-selenouridine (Se2U) in the tRNA chain. The sequence is that of tRNA 2-selenouridine synthase from Proteus mirabilis (strain HI4320).